A 504-amino-acid polypeptide reads, in one-letter code: UDP-N-acetylmuramoylalanine--D-glutamate ligase (504 aa).

129 to 135 is a binding site for ATP; that stretch reads GTNGKTT.

Belongs to the MurCDEF family.

The protein resides in the cytoplasm. It catalyses the reaction UDP-N-acetyl-alpha-D-muramoyl-L-alanine + D-glutamate + ATP = UDP-N-acetyl-alpha-D-muramoyl-L-alanyl-D-glutamate + ADP + phosphate + H(+). It participates in cell wall biogenesis; peptidoglycan biosynthesis. Functionally, cell wall formation. Catalyzes the addition of glutamate to the nucleotide precursor UDP-N-acetylmuramoyl-L-alanine (UMA). This is UDP-N-acetylmuramoylalanine--D-glutamate ligase from Burkholderia pseudomallei (strain 668).